Here is a 357-residue protein sequence, read N- to C-terminus: Peptide chain release factor 1 (357 aa).

The residue at position 232 (Gln232) is an N5-methylglutamine.

This sequence belongs to the prokaryotic/mitochondrial release factor family. In terms of processing, methylated by PrmC. Methylation increases the termination efficiency of RF1.

It localises to the cytoplasm. Peptide chain release factor 1 directs the termination of translation in response to the peptide chain termination codons UAG and UAA. The protein is Peptide chain release factor 1 of Nitratidesulfovibrio vulgaris (strain ATCC 29579 / DSM 644 / CCUG 34227 / NCIMB 8303 / VKM B-1760 / Hildenborough) (Desulfovibrio vulgaris).